We begin with the raw amino-acid sequence, 1094 residues long: Probable arabinosyltransferase C (1094 aa).

Helical transmembrane passes span Ile28–Leu50, Ala232–Leu251, Pro264–Phe286, Ser341–Ser360, Thr373–Leu392, Ile431–Ile453, Arg466–Phe488, Ser530–Leu552, Ser565–Thr582, Trp586–Val608, Thr620–Tyr642, Trp657–Phe679, and Leu700–Ser722. A compositionally biased stretch (low complexity) spans Gly817–Gly831. The disordered stretch occupies residues Gly817–Arg836.

The protein belongs to the emb family.

The protein localises to the cell membrane. In terms of biological role, arabinosyl transferase responsible for the polymerization of arabinose into the arabinan of arabinogalactan. This chain is Probable arabinosyltransferase C (embC), found in Mycobacterium bovis (strain ATCC BAA-935 / AF2122/97).